Reading from the N-terminus, the 277-residue chain is Putative glucose-6-phosphate/phosphate-translocator-like protein 1 (277 aa).

Helical transmembrane passes span 8–28, 46–66, 124–143, 153–173, and 230–250; these read VLPS…WWAL, LWLT…VSWV, MIGF…RNIF, VSVM…VTPF, and PLKH…FIYS.

This sequence belongs to the TPT transporter family. GPT (TC 2.A.7.9) subfamily.

It localises to the membrane. In Arabidopsis thaliana (Mouse-ear cress), this protein is Putative glucose-6-phosphate/phosphate-translocator-like protein 1.